A 199-amino-acid chain; its full sequence is Urease accessory protein UreG (199 aa).

8–15 serves as a coordination point for GTP; the sequence is GPVGSGKT.

This sequence belongs to the SIMIBI class G3E GTPase family. UreG subfamily. Homodimer. UreH, UreF and UreG form a complex that acts as a GTP-hydrolysis-dependent molecular chaperone, activating the urease apoprotein by helping to assemble the nickel containing metallocenter of UreC. The UreE protein probably delivers the nickel.

Its subcellular location is the cytoplasm. Facilitates the functional incorporation of the urease nickel metallocenter. This process requires GTP hydrolysis, probably effectuated by UreG. The protein is Urease accessory protein UreG of Helicobacter pylori (strain J99 / ATCC 700824) (Campylobacter pylori J99).